Reading from the N-terminus, the 417-residue chain is MSTPRSGCEILCIGTELLLGNILNGNARWLAESLASLGIPHFRQGVVGDNPERLGEAVLEAASRSRLLICTGGLGPTPDDLTTETLAACFGVALEERADVLADLEAKLRARGRSLGSSNRKQALLPQGAEVLPNPTGTAPGIIWTPQPGFTVLTFPGVPSEMRAMWQQTAVPWLQAQHLVAGTFRSRLLHFWGLSESSLAESVAPLLELQNPTVAPYACQGEVKLRITAHGATASKAEAAIAPVEQELRRIGGEHCFGADDDSLASVVLQQLRSRNQTLAVAESCTGGGVGSALTAISGSSDVFLGGVIAYANRIKQDLLQVPSKLLEREGAVSAAVATAMAEGARRQLGSDWGVAVTGVAGPGGGSDSKPVGLVHFAVAGPDGCSHLERRYGDRRGRDWIRGLSVGDALNLLRLQL.

This sequence belongs to the CinA family.

In Synechococcus sp. (strain RCC307), this protein is CinA-like protein.